Reading from the N-terminus, the 826-residue chain is MIVRNLLGKNRLCCLQPKLLLSTLSQRPQLQLSLQLLCRATRLYATVNDIALPKTRNIGIIAHIDAGKTTTTERMIYYSGKSKRIGNVDEGDTVTDYLQAERERGITIQLAAITIPWNNHKINIIDTPGHADFTFEVIRSLRVLDGAVTILDAVAGVEAQTEKVWKQASALKLPRMIYVNKMDRPGAGFSRTVKEVIQKLETRVVLCNTPFFENQELNPEFRGVIDVIHGKLLKWKEADEFGKEIDVEDIDETKPELYDVYCKAREYMVETLGEYDESIIDAFLENDENYLKISPELLNRAIRKATIDNYLVPVFCGASFRNIGVQPLMDGITNYLPSPLETPVPDIKSKKKQEISAKMANNGLIINNDPKLTVGLVFKVMNHATRGPMAFVRIYSGKLVANSMVVNSRTGAKHSVRKLLIMHGDQPEEVKFIGAGNIGVISGFEDEFHTGDTVISHATSKKAVGTMESTIKLMPIDIPPPLFNSSIEPFTAGDEAHMKKCIDILIREDPSLKVHTEEDMGQTILSGMGELHLEIVRDRLINDMKVKANLRDIAVAYKESYIGKTPTNGLFETESIQVKLSIEHVDDCKSFEDVDGAIIFEDQNNVIIVPESLASETVQSATEGRRWKCPSSYEELHEAVVNGCSMALQTGGPHLGLSLHSTLVKVEFWNAPVEVNEELIPPLMNAAREAVQSVKASENKFGFLEPLMNVRVFVDSADMGEVSHDLSQRCQALIHSVEDESLLNLETANWAKDEAERAYLPPDYTMSKTALADNYKTRKVIHAETPLKEMIGYLSKLRSLTGGKATFDMSFLGMRRVTQSRLNQIF.

A mitochondrion-targeting transit peptide spans 1-44; sequence MIVRNLLGKNRLCCLQPKLLLSTLSQRPQLQLSLQLLCRATRLY. Residues 53–340 form the tr-type G domain; sequence PKTRNIGIIA…GITNYLPSPL (288 aa). Residues 62–69, 126–130, and 180–183 each bind GTP; these read AHIDAGKT, DTPGH, and NKMD.

Belongs to the TRAFAC class translation factor GTPase superfamily. Classic translation factor GTPase family. EF-G/EF-2 subfamily.

The protein localises to the mitochondrion. Its function is as follows. Mitochondrial GTPase that mediates the disassembly of ribosomes from messenger RNA at the termination of mitochondrial protein biosynthesis. Not involved in the GTP-dependent ribosomal translocation step during translation elongation. In Lodderomyces elongisporus (strain ATCC 11503 / CBS 2605 / JCM 1781 / NBRC 1676 / NRRL YB-4239) (Yeast), this protein is Ribosome-releasing factor 2, mitochondrial.